A 450-amino-acid chain; its full sequence is Proline--tRNA ligase (450 aa).

Belongs to the class-II aminoacyl-tRNA synthetase family. ProS type 2 subfamily. Homodimer.

It localises to the cytoplasm. The enzyme catalyses tRNA(Pro) + L-proline + ATP = L-prolyl-tRNA(Pro) + AMP + diphosphate. In terms of biological role, catalyzes the attachment of proline to tRNA(Pro) in a two-step reaction: proline is first activated by ATP to form Pro-AMP and then transferred to the acceptor end of tRNA(Pro). The polypeptide is Proline--tRNA ligase (Paracoccus denitrificans (strain Pd 1222)).